Consider the following 505-residue polypeptide: N-succinylglutamate 5-semialdehyde dehydrogenase (505 aa).

234 to 239 (GSAHTG) serves as a coordination point for NAD(+). Residues Glu257 and Cys291 contribute to the active site.

This sequence belongs to the aldehyde dehydrogenase family. AstD subfamily.

The enzyme catalyses N-succinyl-L-glutamate 5-semialdehyde + NAD(+) + H2O = N-succinyl-L-glutamate + NADH + 2 H(+). Its pathway is amino-acid degradation; L-arginine degradation via AST pathway; L-glutamate and succinate from L-arginine: step 4/5. Its function is as follows. Catalyzes the NAD-dependent reduction of succinylglutamate semialdehyde into succinylglutamate. The sequence is that of N-succinylglutamate 5-semialdehyde dehydrogenase from Yersinia pestis (strain Pestoides F).